The following is a 214-amino-acid chain: Glycine-rich protein 2 (214 aa).

The CSD domain occupies 8-75; the sequence is RAKGTVKWFS…RTKAVDVTGP (68 aa). Residues 54 to 91 form a disordered region; sequence TVEFEVESGGDGRTKAVDVTGPDGAAVQGGRGGGGGGG. Positions 80-91 are enriched in gly residues; the sequence is VQGGRGGGGGGG. 2 CCHC-type zinc fingers span residues 157-174 and 194-211; these read SGCFKCGESGHFARDCSQ and GGCYKCGEDGHFARECTS.

The sequence is that of Glycine-rich protein 2 (GRP-2) from Nicotiana sylvestris (Wood tobacco).